We begin with the raw amino-acid sequence, 354 residues long: MSQWRGLLQEYKEFLPVTEETPLLTLGEGNTPLIPLENLSKEWGVKAYVKYEGANPTGSFKDRGMVMAVAKAKEEGSRTIICASTGNTSAAAAAYGARAGLRCIVVIPEGKIALGKLAQAVMYGAEVLEIKGNFDHALDIVRSISEKEPITLVNSVNPYRIEGQKTSAFEICDALGQAPDVLAIPVGNAGNITAYWKGFKEYHEKKGTGLPQMRGFEAEGAAAIVRNQVIEEPETIATAIRIGNPASWTYAVEAAAESNGKIDEVTDEEILAAYQLLAQKEGVFAEPASCASIAGLRKQIASGEIKKGSTVVCVLTGNGLKDPNTAMSTIDVNPAVLPNDEQAFLDHIKGGVPK.

Position 61 is an N6-(pyridoxal phosphate)lysine (Lys61). Pyridoxal 5'-phosphate is bound by residues Asn87, 187–191 (GNAGN), and Thr316.

Belongs to the threonine synthase family. Requires pyridoxal 5'-phosphate as cofactor.

The enzyme catalyses O-phospho-L-homoserine + H2O = L-threonine + phosphate. It functions in the pathway amino-acid biosynthesis; L-threonine biosynthesis; L-threonine from L-aspartate: step 5/5. Functionally, catalyzes the gamma-elimination of phosphate from L-phosphohomoserine and the beta-addition of water to produce L-threonine. This chain is Threonine synthase (thrC), found in Halalkalibacterium halodurans (strain ATCC BAA-125 / DSM 18197 / FERM 7344 / JCM 9153 / C-125) (Bacillus halodurans).